The sequence spans 33 residues: Brevinin-2GRb (33 aa).

In terms of tissue distribution, expressed by the skin glands.

It localises to the secreted. In terms of biological role, antimicrobial peptide active against the Gram-positive bacterium S.aureus (MIC=25 uM) and against the Gram-negative bacteria E.coli (MIC=6 uM). Has no antifungal activity against C.albicans. Shows hemolytic activity against human erythrocytes only at high concentrations (LC(50)=180 uM). The polypeptide is Brevinin-2GRb (Odorrana grahami (Yunnanfu frog)).